We begin with the raw amino-acid sequence, 217 residues long: Adenylate kinase (217 aa).

Residue 12–17 (GAGKGS) coordinates ATP. The interval 32 to 61 (STGDMFRTHIKGSTPLGLEAKKYTDQGLLV) is NMP. AMP is bound by residues threonine 33, arginine 38, 59–61 (LLV), 87–90 (GYPR), and glutamine 94. Residues 128-165 (GRRTCPVCGAIYHVDNYPPKVAGICDNDGATLVQRKDD) form an LID region. Arginine 129 is an ATP binding site. Zn(2+) contacts are provided by cysteine 132 and cysteine 135. Position 138 to 139 (138 to 139 (IY)) interacts with ATP. The Zn(2+) site is built by cysteine 152 and aspartate 155. Residues arginine 162 and arginine 173 each contribute to the AMP site. An ATP-binding site is contributed by glutamine 201.

Belongs to the adenylate kinase family. As to quaternary structure, monomer.

Its subcellular location is the cytoplasm. The enzyme catalyses AMP + ATP = 2 ADP. It functions in the pathway purine metabolism; AMP biosynthesis via salvage pathway; AMP from ADP: step 1/1. Functionally, catalyzes the reversible transfer of the terminal phosphate group between ATP and AMP. Plays an important role in cellular energy homeostasis and in adenine nucleotide metabolism. The chain is Adenylate kinase from Acholeplasma laidlawii (strain PG-8A).